We begin with the raw amino-acid sequence, 145 residues long: MRTTFMAKANEVERKWYVVDAEGQTLGRLSTEVASILRGKNKPTFTPHVDTGDHVIIINAEKIHLTGNKLNDKIYYRHTNHPGGLKQRTALEMRTNYPVQMLELAIKGMLPKGRLGRQVSKKLNVYAGAEHPHQAQKPEVYELRG.

Belongs to the universal ribosomal protein uL13 family. In terms of assembly, part of the 50S ribosomal subunit.

Functionally, this protein is one of the early assembly proteins of the 50S ribosomal subunit, although it is not seen to bind rRNA by itself. It is important during the early stages of 50S assembly. This is Large ribosomal subunit protein uL13 from Bacillus cereus (strain G9842).